The following is a 414-amino-acid chain: Small ribosomal subunit protein mS46 (414 aa).

Over residues 20-35 (LNAQQQQRPFSSTTTR) the composition is skewed to polar residues. Disordered stretches follow at residues 20–71 (LNAQ…EAAV) and 168–229 (AGPG…DAPP). Composition is skewed to low complexity over residues 45 to 59 (PAAA…APGP) and 168 to 200 (AGPG…PFGA). Basic and acidic residues predominate over residues 205–224 (PAGDKKRSGGSGDKRPRGDD).

It belongs to the mitochondrion-specific ribosomal protein mS46 family. As to quaternary structure, component of the mitochondrial small ribosomal subunit (mt-SSU). Mature N.crassa 74S mitochondrial ribosomes consist of a small (37S) and a large (54S) subunit. The 37S small subunit contains a 16S ribosomal RNA (16S mt-rRNA) and 32 different proteins. The 54S large subunit contains a 23S rRNA (23S mt-rRNA) and 42 different proteins.

The protein localises to the mitochondrion. Component of the mitochondrial ribosome (mitoribosome), a dedicated translation machinery responsible for the synthesis of mitochondrial genome-encoded proteins, including at least some of the essential transmembrane subunits of the mitochondrial respiratory chain. The mitoribosomes are attached to the mitochondrial inner membrane and translation products are cotranslationally integrated into the membrane. This chain is Small ribosomal subunit protein mS46 (rsm28), found in Neurospora crassa (strain ATCC 24698 / 74-OR23-1A / CBS 708.71 / DSM 1257 / FGSC 987).